We begin with the raw amino-acid sequence, 638 residues long: SUMO-activating enzyme subunit 2 (638 aa).

Residues G24 to G29, D48, N56 to R59, K72, S95 to I96, and D117 to R122 each bind ATP. The Zn(2+) site is built by C158 and C161. Residue K164 forms a Glycyl lysine isopeptide (Lys-Gly) (interchain with G-Cter in SUMO1) linkage. C173 acts as the Glycyl thioester intermediate in catalysis. A Glycyl lysine isopeptide (Lys-Gly) (interchain with G-Cter in SUMO) cross-link involves residue K190. Positions A202–G233 are disordered. S207 carries the post-translational modification Phosphoserine. Positions A222–G233 are enriched in basic and acidic residues. Residue K236 forms a Glycyl lysine isopeptide (Lys-Gly) (interchain with G-Cter in SUMO1); alternate linkage. Glycyl lysine isopeptide (Lys-Gly) (interchain with G-Cter in SUMO2); alternate cross-links involve residues K236 and K257. Residues K257 and K271 each participate in a glycyl lysine isopeptide (Lys-Gly) (interchain with G-Cter in SUMO); alternate cross-link. Residue K271 is modified to N6-acetyllysine; alternate. A Glycyl lysine isopeptide (Lys-Gly) (interchain with G-Cter in SUMO) cross-link involves residue K275. K369 participates in a covalent cross-link: Glycyl lysine isopeptide (Lys-Gly) (interchain with G-Cter in SUMO2). K418 participates in a covalent cross-link: Glycyl lysine isopeptide (Lys-Gly) (interchain with G-Cter in SUMO1); alternate. A Glycyl lysine isopeptide (Lys-Gly) (interchain with G-Cter in SUMO2); alternate cross-link involves residue K418. 2 residues coordinate Zn(2+): C439 and C442. The residue at position 505 (S505) is a Phosphoserine. K538 is covalently cross-linked (Glycyl lysine isopeptide (Lys-Gly) (interchain with G-Cter in SUMO2)). Phosphoserine is present on residues S548 and S590. Positions S548 to A561 are enriched in basic and acidic residues. The interval S548–D638 is disordered. The segment covering E581 to G594 has biased composition (acidic residues). Basic and acidic residues predominate over residues G603–E614. Residue K609 forms a Glycyl lysine isopeptide (Lys-Gly) (interchain with G-Cter in SUMO) linkage. A Glycyl lysine isopeptide (Lys-Gly) (interchain with G-Cter in SUMO); alternate cross-link involves residue K611. K611 is subject to N6-acetyllysine; alternate. K621 participates in a covalent cross-link: Glycyl lysine isopeptide (Lys-Gly) (interchain with G-Cter in SUMO). The span at M628–D638 shows a compositional bias: acidic residues.

Belongs to the ubiquitin-activating E1 family. In terms of assembly, heterodimer of SAE1 and UBA2/SAE2. The heterodimer corresponds to the two domains that are encoded on a single polypeptide chain in ubiquitin-activating enzyme E1. Interacts with UBE2I. Sumoylated with SUMO1 and SUMO2/3 and by UBC9. Sumoylation at Lys-236 inhibits enzymatic activity. Sumoylation at the C-terminal lysine cluster plays an essential role in nuclear trafficking. As to expression, broadly expressed, with highest levels in testis.

The protein localises to the cytoplasm. The protein resides in the nucleus. The protein operates within protein modification; protein sumoylation. Functionally, the heterodimer acts as an E1 ligase for SUMO1, SUMO2, SUMO3, and probably SUMO4. It mediates ATP-dependent activation of SUMO proteins followed by formation of a thioester bond between a SUMO protein and a conserved active site cysteine residue on UBA2/SAE2. This chain is SUMO-activating enzyme subunit 2 (Uba2), found in Mus musculus (Mouse).